The chain runs to 918 residues: Interleukin-6 receptor subunit beta (918 aa).

The N-terminal stretch at 1–22 (MSALRIWLMQALLIFLTTESIG) is a signal peptide. Topologically, residues 23 to 618 (QLVEPCGYIY…TLKFAQGEIE (596 aa)) are extracellular. Residues 26–120 (EPCGYIYPEF…IEQNVYGITI (95 aa)) enclose the Ig-like C2-type domain. Intrachain disulfides connect cysteine 28–cysteine 54 and cysteine 48–cysteine 103. Residues asparagine 43, asparagine 61, asparagine 83, and asparagine 131 are each glycosylated (N-linked (GlcNAc...) asparagine). 5 consecutive Fibronectin type-III domains span residues 125–215 (PPDI…NFDP), 223–323 (PPHN…TYED), 328–418 (APSF…IPGS), 422–516 (ASHP…LKQA), and 518–612 (PSKG…TLKF). Cysteine 134 and cysteine 144 form a disulfide bridge. Asparagine 157 carries an N-linked (GlcNAc...) asparagine glycan. A disulfide bond links cysteine 172 and cysteine 181. Asparagine 205 and asparagine 226 each carry an N-linked (GlcNAc...) asparagine glycan. Positions 309 to 313 (WSDWS) match the WSXWS motif motif. Asparagine 382 and asparagine 389 each carry an N-linked (GlcNAc...) asparagine glycan. The cysteines at positions 457 and 465 are disulfide-linked. Residues asparagine 477 and asparagine 552 are each glycosylated (N-linked (GlcNAc...) asparagine). Residues 619–640 (AIVVPVCLAFLLTTLLGVLFCF) traverse the membrane as a helical segment. Topologically, residues 641 to 918 (NKRDLIKKHI…TVRQGGYMPQ (278 aa)) are cytoplasmic. A Box 1 motif motif is present at residues 650 to 658 (IWPNVPDPS). Disordered regions lie at residues 659–679 (KSHIAQWSPHTPPRHNFNSKD), 720–754 (TEGHSSGIGGSSCMSSSRPSISSSEENESAQSTAS), 773–795 (VQVFSRSESTQPLLDSEERPEDL), and 817–842 (SCSQPGASPDVSHFGRSSQVPSGSEE). Phosphoserine occurs at positions 660 and 666. Residues 730 to 751 (SSCMSSSRPSISSSEENESAQS) show a composition bias toward low complexity. A compositionally biased stretch (polar residues) spans 773 to 785 (VQVFSRSESTQPL). Phosphoserine is present on residues serine 781, serine 788, serine 828, and serine 838.

Belongs to the type I cytokine receptor family. Type 2 subfamily. As to quaternary structure, component of a hexamer of two molecules each of IL6, IL6R and IL6ST; associates with the complex IL6:IL6R but does not interact with IL6. Forms heterodimers composed of LIFR and IL6ST (type I OSM receptor) which are activated by LIF and OSM. Also forms heterodimers composed of OSMR and IL6ST (type II receptor) which are activated by OSM but not by LIF. Interacts with HCK. Interacts with INPP5D/SHIP1. Interacts with SRC and YES. Interacts with ARMH4; this interaction prevents IL6ST protein homodimerization and bridges ARMH4 with IL6R and STAT3 and therefore inhibits phosphorylation of STAT3 at 'Tyr-705'. Phosphorylation of Ser-781 down-regulates cell surface expression. Post-translationally, heavily N-glycosylated. Glycosylation is required for protein stability and localization in plasma membrane but not for ligand binding. Found in hepatocytes, astrocytes, fibroblasts and endothelial cells.

It is found in the cell membrane. Functionally, signal-transducing molecule. The receptor systems for IL6, LIF, OSM, CNTF, IL11, CTF1 and BSF3 can utilize IL6ST for initiating signal transmission. Binding of IL6 to IL6R induces IL6ST homodimerization and formation of a high-affinity receptor complex, which activates the intracellular JAK-MAPK and JAK-STAT3 signaling pathways. That causes phosphorylation of IL6ST tyrosine residues which in turn activates STAT3. In parallel, the IL6 signaling pathway induces the expression of two cytokine receptor signaling inhibitors, SOCS1 and SOCS3, which inhibit JAK and terminate the activity of the IL6 signaling pathway as a negative feedback loop. Also activates the yes-associated protein 1 (YAP) and NOTCH pathways to control inflammation-induced epithelial regeneration, independently of STAT3. Mediates signals which regulate immune response, hematopoiesis, pain control and bone metabolism. Has a role in embryonic development. Essential for survival of motor and sensory neurons and for differentiation of astrocytes. Required for expression of TRPA1 in nociceptive neurons. Required for the maintenance of PTH1R expression in the osteoblast lineage and for the stimulation of PTH-induced osteoblast differentiation. Required for normal trabecular bone mass and cortical bone composition. This chain is Interleukin-6 receptor subunit beta, found in Rattus norvegicus (Rat).